Reading from the N-terminus, the 288-residue chain is UTP--glucose-1-phosphate uridylyltransferase (288 aa).

It belongs to the UDPGP type 2 family.

It catalyses the reaction alpha-D-glucose 1-phosphate + UTP + H(+) = UDP-alpha-D-glucose + diphosphate. The protein operates within glycolipid metabolism; diglucosyl-diacylglycerol biosynthesis. Functionally, catalyzes the formation of UDP-glucose from glucose-1-phosphate and UTP. This is an intermediate step in the biosynthesis of diglucosyl-diacylglycerol (Glc2-DAG), i.e. a glycolipid found in the membrane, which is also used as a membrane anchor for lipoteichoic acid (LTA). The sequence is that of UTP--glucose-1-phosphate uridylyltransferase (gtaB) from Staphylococcus epidermidis (strain ATCC 35984 / DSM 28319 / BCRC 17069 / CCUG 31568 / BM 3577 / RP62A).